The sequence spans 769 residues: Probable protease Ga0334635_1659 (769 aa).

Residues 118–167 (VARGSSDNNGAPPLSFTLSHGDPKSDPEPSSPSRLVNTGLSEAERPESPL) form a disordered region.

Functionally, probably a dedicated protease for substrate gasdermin bGSDM; cleaves the bGSDM precursor, releasing the pore-forming moiety, which integrates into the membrane and triggers cell death. Involved in defense against bacteriophages. Expression of gasdermin bGSDM and this neighboring protease is toxic in E.coli. The chain is Probable protease Ga0334635_1659 from Vitiosangium sp. (strain GDMCC 1.1324).